The following is a 204-amino-acid chain: Putative copper-binding protein (204 aa).

C77, C81, and H166 together coordinate Cu cation.

Belongs to the SCO1/2 family.

The sequence is that of Putative copper-binding protein (scoP) from Stutzerimonas stutzeri (Pseudomonas stutzeri).